The following is a 1186-amino-acid chain: ATP-dependent helicase/deoxyribonuclease subunit B (1186 aa).

The 308-residue stretch at 1–308 folds into the UvrD-like helicase ATP-binding domain; that stretch reads MSVKFLLGRA…AHLEKEWGKN (308 aa). ATP is bound at residue 8 to 15; the sequence is GRAGSGKT. One can recognise a UvrD-like helicase C-terminal domain in the interval 288-620; sequence SLPRFKDNPA…LVGTADRSRY (333 aa). [4Fe-4S] cluster is bound by residues cysteine 822, cysteine 1144, cysteine 1147, and cysteine 1153.

It belongs to the helicase family. AddB/RexB type 1 subfamily. Heterodimer of AddA and AddB. Requires Mg(2+) as cofactor. [4Fe-4S] cluster serves as cofactor.

Functionally, the heterodimer acts as both an ATP-dependent DNA helicase and an ATP-dependent, dual-direction single-stranded exonuclease. Recognizes the chi site generating a DNA molecule suitable for the initiation of homologous recombination. The AddB subunit has 5' -&gt; 3' nuclease activity but not helicase activity. In Natranaerobius thermophilus (strain ATCC BAA-1301 / DSM 18059 / JW/NM-WN-LF), this protein is ATP-dependent helicase/deoxyribonuclease subunit B.